A 442-amino-acid polypeptide reads, in one-letter code: Plasmalemma vesicle-associated protein (442 aa).

The Cytoplasmic portion of the chain corresponds to 1-27; the sequence is MGLAMEHGGSYARAGGSSRGCWYYLRY. A helical; Signal-anchor for type II membrane protein membrane pass occupies residues 28-48; that stretch reads FFLFVSLIQFLIILGLVLFMV. At 49–442 the chain is on the extracellular side; the sequence is YGNVHVSTES…AGIPVAPSSG (394 aa). Residues 57–77 are a coiled coil; the sequence is ESNLQATERRAEGLYSQLLGL. N-linked (GlcNAc...) asparagine glycosylation is found at Asn-83, Asn-89, Asn-113, and Asn-151. Coiled-coil stretches lie at residues 202–225 and 280–387; these read KTRE…QALC and SSKV…SALD. Disordered stretches follow at residues 301-328 and 394-418; these read NSDL…VEKE and SQPM…PASL. Positions 319–328 are enriched in basic and acidic residues; it reads QEAKQKVEKE.

As to quaternary structure, homodimer. As to expression, expressed in lung, kidney, heart, aorta, placenta, muscle, pituitary gland, adrenals, mammary gland, bladder, lymph node, bone marrow, trachea, digestive tract, liver and tumor-associated endothelium.

It is found in the cell membrane. The protein localises to the membrane. The protein resides in the caveola. It localises to the cytoplasm. Its subcellular location is the perinuclear region. Functionally, endothelial cell-specific membrane protein involved in the formation of the diaphragms that bridge endothelial fenestrae. It is also required for the formation of stomata of caveolae and transendothelial channels. Functions in microvascular permeability, endothelial fenestrae contributing to the passage of water and solutes and regulating transcellular versus paracellular flow in different organs. Plays a specific role in embryonic development. The chain is Plasmalemma vesicle-associated protein (PLVAP) from Homo sapiens (Human).